The chain runs to 630 residues: Sodium-dependent serotonin transporter (630 aa).

The Cytoplasmic segment spans residues Met1 to Asp87. The segment at Glu23–Ser60 is disordered. The segment covering Ser41–Ala55 has biased composition (polar residues). Residue Tyr47 is modified to Phosphotyrosine. Residues Phe88–Asn112 traverse the membrane as a helical segment. Na(+) is bound by residues Gly94, Ala96, Val97, Asp98, and Asn101. Asp98 is a serotonin binding site. The Extracellular segment spans residues Gly113 to Gly115. The helical transmembrane segment at Ala116 to Met135 threads the bilayer. The Cytoplasmic portion of the chain corresponds to Glu136–Gly160. Residue Tyr142 is modified to Phosphotyrosine. A helical transmembrane segment spans residues Ile161–Tyr186. Residues Leu187–Ser252 lie on the Extracellular side of the membrane. Residues Cys200 and Cys209 are joined by a disulfide bond. 2 N-linked (GlcNAc...) asparagine glycosylation sites follow: Asn208 and Asn217. The helical transmembrane segment at Trp253–Trp271 threads the bilayer. The Cytoplasmic segment spans residues Lys272–Ser277. Thr276 carries the phosphothreonine modification. Residues Gly278–Val297 form a helical membrane-spanning segment. At Arg298–Gly324 the chain is on the extracellular side. A helical membrane pass occupies residues Val325–Phe347. Ser336 provides a ligand contact to Na(+). The Cytoplasmic portion of the chain corresponds to Ala348 to Asp360. Residues Ala361–Phe380 traverse the membrane as a helical segment. Position 368 (Asn368) interacts with Na(+). Residues Thr381–Thr421 lie on the Extracellular side of the membrane. The chain crosses the membrane as a helical span at residues Phe422–Leu443. 3 residues coordinate Na(+): Leu434, Asp437, and Ser438. Thr439 contributes to the serotonin binding site. The Cytoplasmic portion of the chain corresponds to Glu444 to Glu463. Residues Trp464–Ser483 form a helical membrane-spanning segment. Residues Gly484–Glu494 lie on the Extracellular side of the membrane. Serotonin-binding residues include Glu494 and Tyr495. Residues Tyr495–Tyr516 form a helical membrane-spanning segment. At Gly517–Arg538 the chain is on the cytoplasmic side. A helical transmembrane segment spans residues Ile539–Met558. Residues Phe556 and Ser559 each contribute to the serotonin site. The Extracellular segment spans residues Ser559–Ser574. A helical transmembrane segment spans residues Ile575–Tyr595. Residues Arg596–Val630 are Cytoplasmic-facing. The tract at residues Thr616–Asp624 is interaction with RAB4A.

This sequence belongs to the sodium:neurotransmitter symporter (SNF) (TC 2.A.22) family. SLC6A4 subfamily. As to quaternary structure, monomer or homooligomer. Interacts with TGFB1I1. Interacts with SEC23A, SEC24C and PATJ. Interacts with NOS1; the interaction may diminish the cell surface localization of SERT in the brain and, correspondingly, reduce serotonin reuptake. Interacts (via C-terminus) with SCAMP2; the interaction is direct and retains transporter molecules intracellularly. Interacts with filamentous actin and STX1A. Interacts (via the N-terminus) with STX1A (via the H3 domain); this interaction regulates SLC4A6 channel conductance. Interacts with ITGAV:ITGB3. Interacts (via C-terminus) with ITGB3; this interaction regulates SLC6A4 trafficking. Post-translationally, phosphorylation at Thr-276 increases 5-HT uptake and is required for cGMP-mediated SERT regulation. Expressed in the intestinal crypt epithelial cells and myenteric neurons of the small intestine (at protein level). Expressed in the brain.

The protein resides in the cell membrane. It is found in the endomembrane system. It localises to the endosome membrane. Its subcellular location is the synapse. The protein localises to the cell junction. The protein resides in the focal adhesion. It is found in the cell projection. It localises to the neuron projection. The enzyme catalyses serotonin(out) + K(+)(in) + Na(+)(out) + H(+)(in) = serotonin(in) + K(+)(out) + Na(+)(in) + H(+)(out). Serotonin transporter that cotransports serotonin with one Na(+) ion in exchange for one K(+) ion and possibly one proton in an overall electroneutral transport cycle. Transports serotonin across the plasma membrane from the extracellular compartment to the cytosol thus limiting serotonin intercellular signaling. Essential for serotonin homeostasis in the central nervous system. In the developing somatosensory cortex, acts in glutamatergic neurons to control serotonin uptake and its trophic functions accounting for proper spatial organization of cortical neurons and elaboration of sensory circuits. In the mature cortex, acts primarily in brainstem raphe neurons to mediate serotonin uptake from the synaptic cleft back into the pre-synaptic terminal thus terminating serotonin signaling at the synapse. Modulates mucosal serotonin levels in the gastrointestinal tract through uptake and clearance of serotonin in enterocytes. Required for enteric neurogenesis and gastrointestinal reflexes. Regulates blood serotonin levels by ensuring rapid high affinity uptake of serotonin from plasma to platelets, where it is further stored in dense granules via vesicular monoamine transporters and then released upon stimulation. Mechanistically, the transport cycle starts with an outward-open conformation having Na1(+) and Cl(-) sites occupied. The binding of a second extracellular Na2(+) ion and serotonin substrate leads to structural changes to outward-occluded to inward-occluded to inward-open, where the Na2(+) ion and serotonin are released into the cytosol. Binding of intracellular K(+) ion induces conformational transitions to inward-occluded to outward-open and completes the cycle by releasing K(+) possibly together with a proton bound to Asp-98 into the extracellular compartment. Na1(+) and Cl(-) ions remain bound throughout the transport cycle. Additionally, displays serotonin-induced channel-like conductance for monovalent cations, mainly Na(+) ions. The channel activity is uncoupled from the transport cycle and may contribute to the membrane resting potential or excitability. This chain is Sodium-dependent serotonin transporter (Slc6a4), found in Rattus norvegicus (Rat).